We begin with the raw amino-acid sequence, 704 residues long: Ribosomal RNA large subunit methyltransferase K/L (704 aa).

This sequence belongs to the methyltransferase superfamily. RlmKL family.

It localises to the cytoplasm. It catalyses the reaction guanosine(2445) in 23S rRNA + S-adenosyl-L-methionine = N(2)-methylguanosine(2445) in 23S rRNA + S-adenosyl-L-homocysteine + H(+). It carries out the reaction guanosine(2069) in 23S rRNA + S-adenosyl-L-methionine = N(2)-methylguanosine(2069) in 23S rRNA + S-adenosyl-L-homocysteine + H(+). Its function is as follows. Specifically methylates the guanine in position 2445 (m2G2445) and the guanine in position 2069 (m7G2069) of 23S rRNA. This is Ribosomal RNA large subunit methyltransferase K/L from Alcanivorax borkumensis (strain ATCC 700651 / DSM 11573 / NCIMB 13689 / SK2).